The primary structure comprises 227 residues: Phosphatidylserine decarboxylase proenzyme (227 aa).

The Schiff-base intermediate with substrate; via pyruvic acid role is filled by Ser-169. Residue Ser-169 is modified to Pyruvic acid (Ser); by autocatalysis. Residues 197-227 form a disordered region; that stretch reads GRIPTPESGRSSSAEATAAPSASSARRSSAS. The span at 206 to 227 shows a compositional bias: low complexity; the sequence is RSSSAEATAAPSASSARRSSAS.

It belongs to the phosphatidylserine decarboxylase family. PSD-A subfamily. Heterodimer of a large membrane-associated beta subunit and a small pyruvoyl-containing alpha subunit. Pyruvate is required as a cofactor. Post-translationally, is synthesized initially as an inactive proenzyme. Formation of the active enzyme involves a self-maturation process in which the active site pyruvoyl group is generated from an internal serine residue via an autocatalytic post-translational modification. Two non-identical subunits are generated from the proenzyme in this reaction, and the pyruvate is formed at the N-terminus of the alpha chain, which is derived from the carboxyl end of the proenzyme. The post-translation cleavage follows an unusual pathway, termed non-hydrolytic serinolysis, in which the side chain hydroxyl group of the serine supplies its oxygen atom to form the C-terminus of the beta chain, while the remainder of the serine residue undergoes an oxidative deamination to produce ammonia and the pyruvoyl prosthetic group on the alpha chain.

It localises to the cell membrane. It carries out the reaction a 1,2-diacyl-sn-glycero-3-phospho-L-serine + H(+) = a 1,2-diacyl-sn-glycero-3-phosphoethanolamine + CO2. The protein operates within phospholipid metabolism; phosphatidylethanolamine biosynthesis; phosphatidylethanolamine from CDP-diacylglycerol: step 2/2. Functionally, catalyzes the formation of phosphatidylethanolamine (PtdEtn) from phosphatidylserine (PtdSer). The sequence is that of Phosphatidylserine decarboxylase proenzyme from Salinibacter ruber (strain DSM 13855 / M31).